A 376-amino-acid polypeptide reads, in one-letter code: Formate dehydrogenase 2 (376 aa).

The substrate site is built by valine 97 and asparagine 121. NAD(+) contacts are provided by residues 176–177, aspartate 197, 244–248, threonine 270, aspartate 296, and 325–328; these read RI, PLHKD, and HISG.

This sequence belongs to the D-isomer specific 2-hydroxyacid dehydrogenase family. FDH subfamily. As to quaternary structure, homodimer.

Its subcellular location is the cytoplasm. It carries out the reaction formate + NAD(+) = CO2 + NADH. In terms of biological role, catalyzes the NAD(+)-dependent oxidation of formate to carbon dioxide. Formate oxidation is the final step in the methanol oxidation pathway in methylotrophic microorganisms. Has a role in the detoxification of exogenous formate in non-methylotrophic organisms. The polypeptide is Formate dehydrogenase 2 (FDH2) (Saccharomyces cerevisiae (strain CEN.PK113-7D) (Baker's yeast)).